Reading from the N-terminus, the 540-residue chain is Phenylalanine--tRNA ligase beta subunit (540 aa).

Positions Met270–Ser347 constitute a B5 domain. Asp325, Asp331, Glu334, and Asp335 together coordinate Mg(2+).

It belongs to the phenylalanyl-tRNA synthetase beta subunit family. Type 2 subfamily. As to quaternary structure, tetramer of two alpha and two beta subunits. Mg(2+) is required as a cofactor.

It is found in the cytoplasm. It catalyses the reaction tRNA(Phe) + L-phenylalanine + ATP = L-phenylalanyl-tRNA(Phe) + AMP + diphosphate + H(+). The polypeptide is Phenylalanine--tRNA ligase beta subunit (Methanococcoides burtonii (strain DSM 6242 / NBRC 107633 / OCM 468 / ACE-M)).